Here is a 100-residue protein sequence, read N- to C-terminus: Aspartyl/glutamyl-tRNA(Asn/Gln) amidotransferase subunit C (100 aa).

The protein belongs to the GatC family. Heterotrimer of A, B and C subunits.

It catalyses the reaction L-glutamyl-tRNA(Gln) + L-glutamine + ATP + H2O = L-glutaminyl-tRNA(Gln) + L-glutamate + ADP + phosphate + H(+). It carries out the reaction L-aspartyl-tRNA(Asn) + L-glutamine + ATP + H2O = L-asparaginyl-tRNA(Asn) + L-glutamate + ADP + phosphate + 2 H(+). Functionally, allows the formation of correctly charged Asn-tRNA(Asn) or Gln-tRNA(Gln) through the transamidation of misacylated Asp-tRNA(Asn) or Glu-tRNA(Gln) in organisms which lack either or both of asparaginyl-tRNA or glutaminyl-tRNA synthetases. The reaction takes place in the presence of glutamine and ATP through an activated phospho-Asp-tRNA(Asn) or phospho-Glu-tRNA(Gln). The protein is Aspartyl/glutamyl-tRNA(Asn/Gln) amidotransferase subunit C of Rickettsia peacockii (strain Rustic).